The following is an 85-amino-acid chain: Sec-independent protein translocase protein TatA (85 aa).

Residues 1-21 (MGIFDWKHWLIILIVVVLVFG) traverse the membrane as a helical segment. Residues 43–85 (VNTEEGENRPAEPQTGTSAGDTLNKTQTIEGQAQKVDTPVRKD) are disordered. Residues 56 to 73 (QTGTSAGDTLNKTQTIEG) are compositionally biased toward polar residues.

This sequence belongs to the TatA/E family. In terms of assembly, the Tat system comprises two distinct complexes: a TatABC complex, containing multiple copies of TatA, TatB and TatC subunits, and a separate TatA complex, containing only TatA subunits. Substrates initially bind to the TatABC complex, which probably triggers association of the separate TatA complex to form the active translocon.

Its subcellular location is the cell inner membrane. Functionally, part of the twin-arginine translocation (Tat) system that transports large folded proteins containing a characteristic twin-arginine motif in their signal peptide across membranes. TatA could form the protein-conducting channel of the Tat system. In Azotobacter vinelandii (strain DJ / ATCC BAA-1303), this protein is Sec-independent protein translocase protein TatA.